Consider the following 189-residue polypeptide: Large ribosomal subunit protein uL5c (189 aa).

It belongs to the universal ribosomal protein uL5 family. In terms of assembly, part of the 50S ribosomal subunit; contacts the 5S rRNA.

It is found in the plastid. It localises to the chloroplast. Its function is as follows. Binds 5S rRNA, forms part of the central protuberance of the 50S subunit. The sequence is that of Large ribosomal subunit protein uL5c (rpl5) from Chara vulgaris (Common stonewort).